Here is a 401-residue protein sequence, read N- to C-terminus: Nicotinate phosphoribosyltransferase (401 aa).

His221 carries the phosphohistidine; by autocatalysis modification.

The protein belongs to the NAPRTase family. Post-translationally, transiently phosphorylated on a His residue during the reaction cycle. Phosphorylation strongly increases the affinity for substrates and increases the rate of nicotinate D-ribonucleotide production. Dephosphorylation regenerates the low-affinity form of the enzyme, leading to product release.

The catalysed reaction is nicotinate + 5-phospho-alpha-D-ribose 1-diphosphate + ATP + H2O = nicotinate beta-D-ribonucleotide + ADP + phosphate + diphosphate. Its pathway is cofactor biosynthesis; NAD(+) biosynthesis; nicotinate D-ribonucleotide from nicotinate: step 1/1. In terms of biological role, catalyzes the synthesis of beta-nicotinate D-ribonucleotide from nicotinate and 5-phospho-D-ribose 1-phosphate at the expense of ATP. The chain is Nicotinate phosphoribosyltransferase from Pectobacterium atrosepticum (strain SCRI 1043 / ATCC BAA-672) (Erwinia carotovora subsp. atroseptica).